Here is a 298-residue protein sequence, read N- to C-terminus: MASNNSRTNSRANYSNEIHDLSTVQNGTMPTMYYGEKAIADFFPPHLLKKVVSEVVATFLLVFMTCGAAGISGSDLSRISQLGQSIAGGLIVTVMIYAVGHISGAHMNPAVTLAFAVFRHFPWIQVPFYWAAQFTGAICASFVLKAVIHPVDVIGTTTPVGPHWHSLVVEVIVTFNMMFVTLAVATDTRAVGELAGLAVGSAVCITSIFAGAISGGSMNPARTLGPALASNKFDGLWIYFLGPVMGTLSGAWTYTFIRFEDTPKEGSSQKLSSFKLRRLRSQQSIAADDVDEMENIQV.

N-linked (GlcNAc...) asparagine glycans are attached at residues Asn-4, Asn-13, and Asn-26. 2 consecutive transmembrane segments (helical) span residues 51–71 (VVSE…AAGI) and 85–105 (SIAG…ISGA). The short motif at 108-110 (NPA) is the NPA 1 element. A run of 3 helical transmembrane segments spans residues 124-144 (IQVP…SFVL), 166-186 (SLVV…AVAT), and 194-214 (LAGL…GAIS). Positions 219–221 (NPA) match the NPA 2 motif. Residues 237–257 (WIYFLGPVMGTLSGAWTYTFI) traverse the membrane as a helical segment.

The protein belongs to the MIP/aquaporin (TC 1.A.8) family. NIP (TC 1.A.8.12) subfamily. As to expression, mainly expressed in the roots. In roots, it localizes in the main and lateral roots, but not in root hairs. Within a root, it localizes on the plasma membrane of the distal side of both exodermis and endodermis, where casparian strips exist (at protein level). Expressed low levels in leaves and anthers.

It localises to the cell membrane. Silicon influx transporter responsible for silicon transport from the external solution to the root cells. Is coupled with the silicon efflux transporter LSI2 in both exodermal and endodermal root cells for an efficient silicon transport across the cells into the stele. Silicon is beneficial to plant growth and helps plants to overcome abiotic and biotic stresses by preventing lodging (falling over) and increasing resistance to pests and diseases, as well as other stresses. Is coupled with LSI2 transporter in roots for efficient uptake of arsenite, which is further dispatched in shoots and grains. Mediates uptake of methylated arsenic species in roots. This Oryza sativa subsp. japonica (Rice) protein is Aquaporin NIP2-1.